The following is a 399-amino-acid chain: Cell division protein FtsZ (399 aa).

Residues 30 to 34, 117 to 119, E148, K152, and D196 contribute to the GTP site; these read GGGSN and GTG. The disordered stretch occupies residues 349 to 368; sequence TLMSGNQNAPSGSYEQQDSS. Over residues 351–368 the composition is skewed to polar residues; the sequence is MSGNQNAPSGSYEQQDSS.

The protein belongs to the FtsZ family. Homodimer. Polymerizes to form a dynamic ring structure in a strictly GTP-dependent manner. Interacts directly with several other division proteins.

The protein localises to the cytoplasm. Functionally, essential cell division protein that forms a contractile ring structure (Z ring) at the future cell division site. The regulation of the ring assembly controls the timing and the location of cell division. One of the functions of the FtsZ ring is to recruit other cell division proteins to the septum to produce a new cell wall between the dividing cells. Binds GTP and shows GTPase activity. This is Cell division protein FtsZ from Borreliella burgdorferi (strain ATCC 35210 / DSM 4680 / CIP 102532 / B31) (Borrelia burgdorferi).